A 141-amino-acid chain; its full sequence is Plasmatocyte-spreading peptide (141 aa).

Residues 1–22 (MKLTINILFCLILISQYNSANG) form the signal peptide. Residues 23 to 118 (NLRDLFNNVR…ATGGKDDKGR (96 aa)) constitute a propeptide that is removed on maturation. Positions 46-58 (VKTLFHPSDKSGN) are enriched in basic and acidic residues. The disordered stretch occupies residues 46 to 118 (VKTLFHPSDK…ATGGKDDKGR (73 aa)). Residues 83-98 (PVAVTPAPVVSTTTQA) are compositionally biased toward low complexity. Residues 99–108 (SAPTVATNGT) show a composition bias toward polar residues. An intrachain disulfide couples Cys125 to Cys137.

Belongs to the GBP/PSP1/paralytic peptide family.

Its function is as follows. Mediates the spreading of plasmatocytes to foreign surfaces. Plasmocytes are a class of hemocytes involved in insect cellular immunity. The sequence is that of Plasmatocyte-spreading peptide (PSP1) from Chrysodeixis includens (Soybean looper).